A 245-amino-acid chain; its full sequence is Octanoyltransferase (245 aa).

The BPL/LPL catalytic domain occupies 54-242; it reads QNAPEQVWLL…AFEQIFGPTI (189 aa). Residues 93-100, 173-175, and 186-188 contribute to the substrate site; these read RGGEFTYH, AIG, and GVS. C204 acts as the Acyl-thioester intermediate in catalysis.

This sequence belongs to the LipB family.

It is found in the cytoplasm. The catalysed reaction is octanoyl-[ACP] + L-lysyl-[protein] = N(6)-octanoyl-L-lysyl-[protein] + holo-[ACP] + H(+). It participates in protein modification; protein lipoylation via endogenous pathway; protein N(6)-(lipoyl)lysine from octanoyl-[acyl-carrier-protein]: step 1/2. Its function is as follows. Catalyzes the transfer of endogenously produced octanoic acid from octanoyl-acyl-carrier-protein onto the lipoyl domains of lipoate-dependent enzymes. Lipoyl-ACP can also act as a substrate although octanoyl-ACP is likely to be the physiological substrate. This Bartonella quintana (strain Toulouse) (Rochalimaea quintana) protein is Octanoyltransferase.